We begin with the raw amino-acid sequence, 159 residues long: Adult-specific rigid cuticular protein 15.7 (159 aa).

The Chitin-binding type R&amp;R domain occupies 23-89; sequence LGNYAFNYGI…SIKTNEPGTA (67 aa).

Its function is as follows. Component of the rigid cuticle of the spider. This chain is Adult-specific rigid cuticular protein 15.7, found in Araneus diadematus (European garden spider).